The primary structure comprises 525 residues: ATP synthase subunit alpha (525 aa).

172-179 contacts ATP; it reads GDRQTGKT.

It belongs to the ATPase alpha/beta chains family. As to quaternary structure, F-type ATPases have 2 components, CF(1) - the catalytic core - and CF(0) - the membrane proton channel. CF(1) has five subunits: alpha(3), beta(3), gamma(1), delta(1), epsilon(1). CF(0) has three main subunits: a(1), b(2) and c(9-12). The alpha and beta chains form an alternating ring which encloses part of the gamma chain. CF(1) is attached to CF(0) by a central stalk formed by the gamma and epsilon chains, while a peripheral stalk is formed by the delta and b chains.

It is found in the cell inner membrane. The enzyme catalyses ATP + H2O + 4 H(+)(in) = ADP + phosphate + 5 H(+)(out). Functionally, produces ATP from ADP in the presence of a proton gradient across the membrane. The alpha chain is a regulatory subunit. The polypeptide is ATP synthase subunit alpha (Parabacteroides distasonis (strain ATCC 8503 / DSM 20701 / CIP 104284 / JCM 5825 / NCTC 11152)).